Reading from the N-terminus, the 206-residue chain is MKPQFITLDGIDGAGKSTNLAVIKAWFERRGLPVLFTREPGGTPVGEALREILLNPETKAGLRAETLMMFAARMQHIEEVILPALSDGIHVVSDRFTDATFAYQGGGRGMPSEDIEILEHWVQGGLRPDLTLLLDVPLEVSMARIGQAREKDRFEQEQADFFMRVRGVYLDRAAACPERYAVIDSNRSLDEVRNSIEKVLDGHFGC.

An ATP-binding site is contributed by 10–17; sequence GIDGAGKS.

It belongs to the thymidylate kinase family.

It carries out the reaction dTMP + ATP = dTDP + ADP. Functionally, phosphorylation of dTMP to form dTDP in both de novo and salvage pathways of dTTP synthesis. The chain is Thymidylate kinase from Neisseria gonorrhoeae (strain ATCC 700825 / FA 1090).